A 230-amino-acid polypeptide reads, in one-letter code: 5'-methylthioadenosine/S-adenosylhomocysteine nucleosidase (230 aa).

The active-site Proton acceptor is Glu-12. Substrate-binding positions include Gly-78, Ile-153, and 174–175; that span reads ME. The active-site Proton donor is the Asp-198.

Belongs to the PNP/UDP phosphorylase family. MtnN subfamily.

The catalysed reaction is S-adenosyl-L-homocysteine + H2O = S-(5-deoxy-D-ribos-5-yl)-L-homocysteine + adenine. The enzyme catalyses S-methyl-5'-thioadenosine + H2O = 5-(methylsulfanyl)-D-ribose + adenine. It catalyses the reaction 5'-deoxyadenosine + H2O = 5-deoxy-D-ribose + adenine. It functions in the pathway amino-acid biosynthesis; L-methionine biosynthesis via salvage pathway; S-methyl-5-thio-alpha-D-ribose 1-phosphate from S-methyl-5'-thioadenosine (hydrolase route): step 1/2. Its function is as follows. Catalyzes the irreversible cleavage of the glycosidic bond in both 5'-methylthioadenosine (MTA) and S-adenosylhomocysteine (SAH/AdoHcy) to adenine and the corresponding thioribose, 5'-methylthioribose and S-ribosylhomocysteine, respectively. Also cleaves 5'-deoxyadenosine, a toxic by-product of radical S-adenosylmethionine (SAM) enzymes, into 5-deoxyribose and adenine. In Shewanella sediminis (strain HAW-EB3), this protein is 5'-methylthioadenosine/S-adenosylhomocysteine nucleosidase.